We begin with the raw amino-acid sequence, 166 residues long: Lipoprotein signal peptidase (166 aa).

4 consecutive transmembrane segments (helical) span residues 11–31 (VWLW…TLVV), 42–62 (LLPV…SFLS), 67–87 (WQRW…VWWL), and 90–110 (LPAT…GAIG). Residues Asp-123 and Asp-141 contribute to the active site. A helical membrane pass occupies residues 133 to 153 (HFPVFNVADCAICIGAALLLF).

This sequence belongs to the peptidase A8 family.

The protein localises to the cell inner membrane. It carries out the reaction Release of signal peptides from bacterial membrane prolipoproteins. Hydrolyzes -Xaa-Yaa-Zaa-|-(S,diacylglyceryl)Cys-, in which Xaa is hydrophobic (preferably Leu), and Yaa (Ala or Ser) and Zaa (Gly or Ala) have small, neutral side chains.. The protein operates within protein modification; lipoprotein biosynthesis (signal peptide cleavage). This protein specifically catalyzes the removal of signal peptides from prolipoproteins. The polypeptide is Lipoprotein signal peptidase (Pseudoalteromonas translucida (strain TAC 125)).